We begin with the raw amino-acid sequence, 288 residues long: DNA repair protein RecO (288 aa).

This sequence belongs to the RecO family.

Its function is as follows. Involved in DNA repair and RecF pathway recombination. This Trichodesmium erythraeum (strain IMS101) protein is DNA repair protein RecO.